We begin with the raw amino-acid sequence, 387 residues long: S-adenosylmethionine synthase (387 aa).

His15 is an ATP binding site. A Mg(2+)-binding site is contributed by Asp17. Glu43 contacts K(+). Residues Glu56 and Gln99 each coordinate L-methionine. The flexible loop stretch occupies residues 99-109; that stretch reads QSPDIALGVNR. ATP is bound by residues 166–168, 232–233, Asp241, 247–248, Ala264, and Lys268; these read DAK, RF, and RK. Asp241 is an L-methionine binding site. Residue Lys272 participates in L-methionine binding.

Belongs to the AdoMet synthase family. As to quaternary structure, homotetramer; dimer of dimers. Requires Mg(2+) as cofactor. It depends on K(+) as a cofactor.

The protein localises to the cytoplasm. It carries out the reaction L-methionine + ATP + H2O = S-adenosyl-L-methionine + phosphate + diphosphate. The protein operates within amino-acid biosynthesis; S-adenosyl-L-methionine biosynthesis; S-adenosyl-L-methionine from L-methionine: step 1/1. Functionally, catalyzes the formation of S-adenosylmethionine (AdoMet) from methionine and ATP. The overall synthetic reaction is composed of two sequential steps, AdoMet formation and the subsequent tripolyphosphate hydrolysis which occurs prior to release of AdoMet from the enzyme. In Nitrosomonas eutropha (strain DSM 101675 / C91 / Nm57), this protein is S-adenosylmethionine synthase.